We begin with the raw amino-acid sequence, 326 residues long: Protein FAM110C (326 aa).

3 disordered regions span residues 1–37, 51–80, and 201–221; these read MRALPTLDSLARTRPSLGDSRAAEGTLTRQPANKSAV, TLGSSRGPVSENRVPEAPGVQHRNPIPSTL, and VELRASRSKGLQRSQSDLSSR. Over residues 209-221 the composition is skewed to polar residues; the sequence is KGLQRSQSDLSSR. A Phosphoserine modification is found at S255.

The protein belongs to the FAM110 family. As to quaternary structure, interacts with AKT1; the interaction is transient and follows AKT1 activation. Interacts with PPP2CA and alpha-tubulin.

It localises to the cytoplasm. The protein localises to the cytoskeleton. The protein resides in the microtubule organizing center. It is found in the centrosome. Its subcellular location is the spindle pole. It localises to the nucleus. Its function is as follows. May play a role in microtubule organization. May play a role in cell spreading and cell migration of epithelial cells; the function may involve the AKT1 signaling pathway. The polypeptide is Protein FAM110C (Fam110c) (Rattus norvegicus (Rat)).